Consider the following 154-residue polypeptide: DNA gyrase inhibitor (154 aa).

This sequence belongs to the DNA gyrase inhibitor family. Interacts with DNA gyrase.

It localises to the cytoplasm. Functionally, inhibits the supercoiling activity of DNA gyrase. Acts by inhibiting DNA gyrase at an early step, prior to (or at the step of) binding of DNA by the gyrase. It protects cells against toxins that target DNA gyrase, by inhibiting activity of these toxins and reducing the formation of lethal double-strand breaks in the cell. The sequence is that of DNA gyrase inhibitor from Pectobacterium carotovorum subsp. carotovorum (strain PC1).